A 186-amino-acid polypeptide reads, in one-letter code: MVQRLKSIYLNNVIPKLNEEAKYKNVHQIPRLKKIVINCGIGEASQNAKTLEYTIRDLSIIAGQRPLVKRAKKAIASFQLRKKMPVGVSVTLRGDAMYAFLDRLINLALPRIRDFQGLNRKSFDGHGNFHLGLKEQLMFPEIDYDKIDKLRGMDICIVTTCTNDNECFQFLSALGMPFQTVSSKKL.

This sequence belongs to the universal ribosomal protein uL5 family. In terms of assembly, part of the 50S ribosomal subunit; contacts the 5S rRNA.

The protein resides in the plastid. Its subcellular location is the chloroplast. In terms of biological role, binds 5S rRNA, forms part of the central protuberance of the 50S subunit. This is Large ribosomal subunit protein uL5c (rpl5) from Chaetosphaeridium globosum (Charophycean green alga).